Reading from the N-terminus, the 158-residue chain is Transcriptional repressor NrdR (158 aa).

The segment at 1-20 (MRCPYCQSEDTQVKDSRPAE) is disordered. The segment at 3-34 (CPYCQSEDTQVKDSRPAEDGAVIRRRRVCSVC) is a zinc-finger region. The segment covering 11–20 (TQVKDSRPAE) has biased composition (basic and acidic residues). The ATP-cone domain occupies 49-139 (LMVVKKSGRR…VYRNFSKAVD (91 aa)).

This sequence belongs to the NrdR family. It depends on Zn(2+) as a cofactor.

Functionally, negatively regulates transcription of bacterial ribonucleotide reductase nrd genes and operons by binding to NrdR-boxes. This chain is Transcriptional repressor NrdR, found in Brucella anthropi (strain ATCC 49188 / DSM 6882 / CCUG 24695 / JCM 21032 / LMG 3331 / NBRC 15819 / NCTC 12168 / Alc 37) (Ochrobactrum anthropi).